We begin with the raw amino-acid sequence, 581 residues long: Coiled-coil domain-containing protein 102A (581 aa).

Disordered regions lie at residues 1-61 (MNHT…GLGC), 156-219 (QRVR…IGTD), 496-517 (QAED…SLDE), and 534-581 (SRLR…LQIP). Positions 39–59 (TPSPSGGTPSSSPPLLLSPGL) are enriched in low complexity. Residues 70–164 (REELRLRELE…AQRVRAEQSS (95 aa)) are a coiled coil. The span at 161-184 (EQSSPENASTAPESISSTASTHSN) shows a compositional bias: polar residues. Basic and acidic residues predominate over residues 185 to 202 (QPREAEIKQDNQDEEGVR). Positions 270-541 (AALEEDTSKL…LQSRLRRQQN (272 aa)) form a coiled coil. Over residues 559–581 (EDADGPPSDPDEDEEEELQLQIP) the composition is skewed to acidic residues.

The protein is Coiled-coil domain-containing protein 102A (ccdc102a) of Danio rerio (Zebrafish).